The sequence spans 347 residues: NADH-ubiquinone oxidoreductase chain 2 (347 aa).

10 helical membrane-spanning segments follow: residues I13 to F33, Y59 to L79, W84 to M104, F111 to L131, I149 to G169, I178 to P198, T201 to I221, I240 to F260, I276 to L296, and L326 to L346.

This sequence belongs to the complex I subunit 2 family. In terms of assembly, core subunit of respiratory chain NADH dehydrogenase (Complex I) which is composed of 45 different subunits. Interacts with TMEM242.

It localises to the mitochondrion inner membrane. It catalyses the reaction a ubiquinone + NADH + 5 H(+)(in) = a ubiquinol + NAD(+) + 4 H(+)(out). Core subunit of the mitochondrial membrane respiratory chain NADH dehydrogenase (Complex I) that is believed to belong to the minimal assembly required for catalysis. Complex I functions in the transfer of electrons from NADH to the respiratory chain. The immediate electron acceptor for the enzyme is believed to be ubiquinone. The chain is NADH-ubiquinone oxidoreductase chain 2 from Chrotopterus auritus (Peters's woolly false vampire bat).